Consider the following 124-residue polypeptide: UPF0337 protein blr1496 (124 aa).

The protein belongs to the UPF0337 (CsbD) family.

This chain is UPF0337 protein blr1496, found in Bradyrhizobium diazoefficiens (strain JCM 10833 / BCRC 13528 / IAM 13628 / NBRC 14792 / USDA 110).